The primary structure comprises 65 residues: Large ribosomal subunit protein bL35 (65 aa).

The protein belongs to the bacterial ribosomal protein bL35 family.

The polypeptide is Large ribosomal subunit protein bL35 (Sorangium cellulosum (strain So ce56) (Polyangium cellulosum (strain So ce56))).